A 272-amino-acid chain; its full sequence is Replication-associated protein A (272 aa).

A CRESS-DNA virus Rep endonuclease domain is found at 11 to 114; that stretch reads SHRNANTFLT…PLAVFERGTF (104 aa). An RCR-1 motif is present at residues 18–21; that stretch reads FLTY. A divalent metal cation contacts are provided by E52, H60, and H62. Positions 60–62 match the RCR-2 motif; it reads HLH. Residue Y100 is the For DNA cleavage activity of the active site. Residues 100–103 carry the RCR-3 motif; the sequence is YILK. E104 serves as a coordination point for a divalent metal cation. Residues 175-187 are oligomerization; that stretch reads SANKLFPEIQEEF. Residues 198–202 are binding to RBR1; that stretch reads LLCNE. The segment at 221–230 is transactivation; the sequence is MLLQPACYTL. The tract at residues 245 to 272 is disordered; it reads SHQMKDQESRASTSSAQQEQENLLGPEA. The segment covering 254–265 has biased composition (polar residues); it reads RASTSSAQQEQE.

It belongs to the geminiviridae Rep protein family. In terms of assembly, homooligomer. Interacts with host retinoblastoma-related protein 1 (RBR1), and may thereby deregulate the host cell cycle. Part of the C- and V-complexes which are RepA-Rep-DNA complexes involved in the c-sense and v-sense transcription. Mg(2+) serves as cofactor. Mn(2+) is required as a cofactor.

It is found in the host nucleus. The protein resides in the host cytoplasm. Functionally, implicated in enhancement of V-sense gene expression. Acts a an inhibitor of C-sense gene transcription. In Avena sativa (Oat), this protein is Replication-associated protein A.